The sequence spans 267 residues: Tryptophan synthase alpha chain (267 aa).

Active-site proton acceptor residues include Glu43 and Asp54.

The protein belongs to the TrpA family. Tetramer of two alpha and two beta chains.

It carries out the reaction (1S,2R)-1-C-(indol-3-yl)glycerol 3-phosphate + L-serine = D-glyceraldehyde 3-phosphate + L-tryptophan + H2O. It participates in amino-acid biosynthesis; L-tryptophan biosynthesis; L-tryptophan from chorismate: step 5/5. Its function is as follows. The alpha subunit is responsible for the aldol cleavage of indoleglycerol phosphate to indole and glyceraldehyde 3-phosphate. This chain is Tryptophan synthase alpha chain, found in Bacillus licheniformis (strain ATCC 14580 / DSM 13 / JCM 2505 / CCUG 7422 / NBRC 12200 / NCIMB 9375 / NCTC 10341 / NRRL NRS-1264 / Gibson 46).